The sequence spans 129 residues: Small ribosomal subunit protein uS12 (129 aa).

Position 89 is a 3-methylthioaspartic acid (Asp-89). The segment at 110 to 129 is disordered; it reads RKQGRSRYGAPRKQVVATKK.

The protein belongs to the universal ribosomal protein uS12 family. As to quaternary structure, part of the 30S ribosomal subunit. Contacts proteins S8 and S17. May interact with IF1 in the 30S initiation complex.

Functionally, with S4 and S5 plays an important role in translational accuracy. Interacts with and stabilizes bases of the 16S rRNA that are involved in tRNA selection in the A site and with the mRNA backbone. Located at the interface of the 30S and 50S subunits, it traverses the body of the 30S subunit contacting proteins on the other side and probably holding the rRNA structure together. The combined cluster of proteins S8, S12 and S17 appears to hold together the shoulder and platform of the 30S subunit. This is Small ribosomal subunit protein uS12 from Rickettsia bellii (strain RML369-C).